Consider the following 354-residue polypeptide: MKKIIMTGGGTAGHVTPNLALVPELKKLGYEIKYIGSIEGIERKIIEKEGIEYFPISSGKLRRYFDLKNFSDPFKVLKGVFQAKKIIKKEKPDIVFSKGGFVTVPVVIAAHLNKIPVIAHESDITPGLANKLATPYCTRVCVTFPESVKHIKGDKAVLTGTPIRRELLEGNKLEGIKLCGFKDNKPILLIIGGSLGSKIINGIVRKNLDNILSKFNIIHICGKSNLDENLENRKGYAQFEYVNEELPDLMKASDLVISRAGANVIYELLALKKPNLLIPLSKKSSRGDQILNAASFEKSGYSLVLKEEELEDKTLMKKLNHLYENRNVYINNMSKSKMDNGVKNITELIKKYTK.

Residues 11-13 (TAG), Arg-164, Ser-194, and Gln-289 contribute to the UDP-N-acetyl-alpha-D-glucosamine site.

Belongs to the glycosyltransferase 28 family. MurG subfamily.

The protein localises to the cell membrane. It carries out the reaction di-trans,octa-cis-undecaprenyl diphospho-N-acetyl-alpha-D-muramoyl-L-alanyl-D-glutamyl-meso-2,6-diaminopimeloyl-D-alanyl-D-alanine + UDP-N-acetyl-alpha-D-glucosamine = di-trans,octa-cis-undecaprenyl diphospho-[N-acetyl-alpha-D-glucosaminyl-(1-&gt;4)]-N-acetyl-alpha-D-muramoyl-L-alanyl-D-glutamyl-meso-2,6-diaminopimeloyl-D-alanyl-D-alanine + UDP + H(+). The protein operates within cell wall biogenesis; peptidoglycan biosynthesis. Its function is as follows. Cell wall formation. Catalyzes the transfer of a GlcNAc subunit on undecaprenyl-pyrophosphoryl-MurNAc-pentapeptide (lipid intermediate I) to form undecaprenyl-pyrophosphoryl-MurNAc-(pentapeptide)GlcNAc (lipid intermediate II). This Clostridium botulinum (strain 657 / Type Ba4) protein is UDP-N-acetylglucosamine--N-acetylmuramyl-(pentapeptide) pyrophosphoryl-undecaprenol N-acetylglucosamine transferase.